The sequence spans 201 residues: Recombination protein RecR (201 aa).

The C4-type zinc-finger motif lies at Cys57–Cys72. In terms of domain architecture, Toprim spans Gly81–Pro176.

The protein belongs to the RecR family.

In terms of biological role, may play a role in DNA repair. It seems to be involved in an RecBC-independent recombinational process of DNA repair. It may act with RecF and RecO. The sequence is that of Recombination protein RecR from Yersinia enterocolitica serotype O:8 / biotype 1B (strain NCTC 13174 / 8081).